Reading from the N-terminus, the 927-residue chain is LPS-assembly protein LptD (927 aa).

A signal peptide spans 1 to 22 (MALKSPAFRKKFPLLVTGSLLA). The disordered stretch occupies residues 60 to 100 (LPPRPVHSTASVSSNGTVTSESSSSGEQVAGPQLVTEAKGK). Residues 70 to 86 (SVSSNGTVTSESSSSGE) show a composition bias toward low complexity.

This sequence belongs to the LptD family. Component of the lipopolysaccharide transport and assembly complex. Interacts with LptE and LptA.

The protein resides in the cell outer membrane. Functionally, together with LptE, is involved in the assembly of lipopolysaccharide (LPS) at the surface of the outer membrane. This is LPS-assembly protein LptD from Pseudomonas syringae pv. tomato (strain ATCC BAA-871 / DC3000).